Reading from the N-terminus, the 273-residue chain is Dermonecrotic toxin LdSicTox-alphaIB3b (273 aa).

Residue His5 is part of the active site. The Mg(2+) site is built by Glu25 and Asp27. The active-site Nucleophile is the His41. Cystine bridges form between Cys45–Cys51 and Cys47–Cys190. Residue Asp85 coordinates Mg(2+).

This sequence belongs to the arthropod phospholipase D family. Class II subfamily. Mg(2+) is required as a cofactor. Expressed by the venom gland.

The protein resides in the secreted. The catalysed reaction is an N-(acyl)-sphingosylphosphocholine = an N-(acyl)-sphingosyl-1,3-cyclic phosphate + choline. It catalyses the reaction an N-(acyl)-sphingosylphosphoethanolamine = an N-(acyl)-sphingosyl-1,3-cyclic phosphate + ethanolamine. It carries out the reaction a 1-acyl-sn-glycero-3-phosphocholine = a 1-acyl-sn-glycero-2,3-cyclic phosphate + choline. The enzyme catalyses a 1-acyl-sn-glycero-3-phosphoethanolamine = a 1-acyl-sn-glycero-2,3-cyclic phosphate + ethanolamine. Functionally, dermonecrotic toxins cleave the phosphodiester linkage between the phosphate and headgroup of certain phospholipids (sphingolipid and lysolipid substrates), forming an alcohol (often choline) and a cyclic phosphate. This toxin acts on sphingomyelin (SM). It may also act on ceramide phosphoethanolamine (CPE), lysophosphatidylcholine (LPC) and lysophosphatidylethanolamine (LPE), but not on lysophosphatidylserine (LPS), and lysophosphatidylglycerol (LPG). It acts by transphosphatidylation, releasing exclusively cyclic phosphate products as second products. Induces dermonecrosis, hemolysis, increased vascular permeability, edema, inflammatory response, and platelet aggregation. This Loxosceles deserta (Desert recluse spider) protein is Dermonecrotic toxin LdSicTox-alphaIB3b.